Consider the following 518-residue polypeptide: MDRAPQRQHRASRELLAAKKTHTSQIEVIPCKICGDKSSGIHYGVITCEGCKGFFRRSQRCNAAYSCTRQQNCPIDRTSRNRCQHCRLQKCLALGMSRDAVKFGRMSKKQRDSLHAEVQKQLQQRQQQQQEPVVKTPPAGAQGADTLTYTLGLPDGQLPLGSSPDLPEASACPPGLLKASGSGPSYSNNLAKAGLNGASCHLEYSPERGKAEGRESFYSTGSQLTPDRCGLRFEEHRHPGLGELGQGPDSYGSPSFRSTPEAPYASLTEIEHLVQSVCKSYRETCQLRLEDLLRQRSNIFSREEVTGYQRKSMWEMWERCAHHLTEAIQYVVEFAKRLSGFMELCQNDQIVLLKAGAMEVVLVRMCRAYNADNRTVFFEGKYGGMELFRALGCSELISSIFDFSHSLSALHFSEDEIALYTALVLINAHRPGLQEKRKVEQLQYNLELAFHHHLCKTHRQSILAKLPPKGKLRSLCSQHVERLQIFQHLHPIVVQAAFPPLYKELFSTETESPVGLSK.

The segment at 1-30 (MDRAPQRQHRASRELLAAKKTHTSQIEVIP) is modulating. NR C4-type zinc fingers lie at residues 31 to 51 (CKIC…CEGC) and 67 to 91 (CTRQ…LQKC). Positions 31–96 (CKICGDKSSG…RLQKCLALGM (66 aa)) form a DNA-binding region, nuclear receptor. 2 disordered regions span residues 105–183 (RMSK…SGSG) and 238–258 (HPGL…SFRS). The span at 109 to 118 (KQRDSLHAEV) shows a compositional bias: basic and acidic residues. A compositionally biased stretch (low complexity) spans 119–130 (QKQLQQRQQQQQ). Positions 269-508 (EIEHLVQSVC…PPLYKELFST (240 aa)) constitute an NR LBD domain. The short motif at 501 to 506 (LYKELF) is the AF-2 element.

Belongs to the nuclear hormone receptor family. NR1 subfamily. In terms of assembly, interacts (via AF-2 motif) with the coactivator NCOA2 (via LXXLL motif). Interacts with the corepressor NCOR1. Interacts with CRY1. Interacts (via AF-2 motif) with the coactivators NCOA1 and PPARGC1A (via LXXLL motif). Interacts (via AF-2 motif) with PROX1. Interacts with FOXP3. Interacts with NR0B2. Isoform 1 is widely expressed in many tissues, including liver and adipose, and highly expressed in skeletal muscle. Isoform 2 is primarily expressed in immature thymocytes.

Its subcellular location is the nucleus. Its function is as follows. Nuclear receptor that binds DNA as a monomer to ROR response elements (RORE) containing a single core motif half-site 5'-AGGTCA-3' preceded by a short A-T-rich sequence. Key regulator of cellular differentiation, immunity, peripheral circadian rhythm as well as lipid, steroid, xenobiotics and glucose metabolism. Considered to have intrinsic transcriptional activity, have some natural ligands like oxysterols that act as agonists (25-hydroxycholesterol) or inverse agonists (7-oxygenated sterols), enhancing or repressing the transcriptional activity, respectively. Recruits distinct combinations of cofactors to target gene regulatory regions to modulate their transcriptional expression, depending on the tissue, time and promoter contexts. Regulates the circadian expression of clock genes such as CRY1, BMAL1 and NR1D1 in peripheral tissues and in a tissue-selective manner. Competes with NR1D1 for binding to their shared DNA response element on some clock genes such as BMAL1, CRY1 and NR1D1 itself, resulting in NR1D1-mediated repression or RORC-mediated activation of the expression, leading to the circadian pattern of clock genes expression. Therefore influences the period length and stability of the clock. Involved in the regulation of the rhythmic expression of genes involved in glucose and lipid metabolism, including PLIN2 and AVPR1A. Negative regulator of adipocyte differentiation through the regulation of early phase genes expression, such as MMP3. Controls adipogenesis as well as adipocyte size and modulates insulin sensitivity in obesity. In liver, has specific and redundant functions with RORA as positive or negative modulator of expression of genes encoding phase I and Phase II proteins involved in the metabolism of lipids, steroids and xenobiotics, such as SULT1E1. Also plays a role in the regulation of hepatocyte glucose metabolism through the regulation of G6PC1 and PCK1. Regulates the rhythmic expression of PROX1 and promotes its nuclear localization. Plays an indispensable role in the induction of IFN-gamma dependent anti-mycobacterial systemic immunity. In terms of biological role, essential for thymopoiesis and the development of several secondary lymphoid tissues, including lymph nodes and Peyer's patches. Required for the generation of LTi (lymphoid tissue inducer) cells. Regulates thymocyte survival through DNA-binding on ROREs of target gene promoter regions and recruitment of coactivaros via the AF-2. Also plays a key role, downstream of IL6 and TGFB and synergistically with RORA, for lineage specification of uncommitted CD4(+) T-helper (T(H)) cells into T(H)17 cells, antagonizing the T(H)1 program. Probably regulates IL17 and IL17F expression on T(H) by binding to the essential enhancer conserved non-coding sequence 2 (CNS2) in the IL17-IL17F locus. May also play a role in the pre-TCR activation cascade leading to the maturation of alpha/beta T-cells and may participate in the regulation of DNA accessibility in the TCR-J(alpha) locus. The polypeptide is Nuclear receptor ROR-gamma (RORC) (Homo sapiens (Human)).